The primary structure comprises 355 residues: 3-dehydroquinate synthase (355 aa).

Residues 71-76, 105-109, 129-130, Lys142, and Lys151 each bind NAD(+); these read EGEASK, GVVGD, and TS. The Zn(2+) site is built by Glu184, His246, and His263.

Belongs to the sugar phosphate cyclases superfamily. Dehydroquinate synthase family. Co(2+) is required as a cofactor. It depends on Zn(2+) as a cofactor. NAD(+) serves as cofactor.

The protein resides in the cytoplasm. The catalysed reaction is 7-phospho-2-dehydro-3-deoxy-D-arabino-heptonate = 3-dehydroquinate + phosphate. The protein operates within metabolic intermediate biosynthesis; chorismate biosynthesis; chorismate from D-erythrose 4-phosphate and phosphoenolpyruvate: step 2/7. Catalyzes the conversion of 3-deoxy-D-arabino-heptulosonate 7-phosphate (DAHP) to dehydroquinate (DHQ). The sequence is that of 3-dehydroquinate synthase from Streptococcus thermophilus (strain ATCC BAA-491 / LMD-9).